Reading from the N-terminus, the 687-residue chain is MTAQSLLQTTLFLLSLLFLVQGAHGRGHREDFRFCSQRNQTHISSLHYKFTPDLRISIENSEEALTVHAPFPEAHPASRSFPHPRGLYHFCLYWDRHAGRLHLLYGKHDFLLSDQASSLLCFQHQEESLAQGPPLFATSVTSWWSPQNISLPSASNFTFSFHSPPHTAAHNASVDMCELKRDLQLLSQFLKHPQKASRRPSATPASQQLQSLESKLTSVRFMGDTVSFEEDRVNATVWKLQPTAGLQDLHIHSRQEQEQSEILEYSVLLPRTLFQRTKGRRGEAEKRLLLVDFSSQALFQDKNSSQVLGEKVLGIVVQNTKVANLTEPVVLTFQHQPQPKNVTLQCVFWVEDPTLSNPGRWSSAGCETVRRETQTSCFCNHLTYFAVLMVSSVEVDAVHKHYLSLLSYVGCVVSALACVVTIAAYLCSRRKPRDYTIKVHMNLLLAVFLLDVSFLLSEPVALTGSQSGCRASAIFLHFSLLACLSWMGLEGYNLYRLVVEVFGTYIPGYLLKLSAMGWGFPIFLVTLVALVDVDNYGPIILAVHRTPESVIYPSMCWIRDSLVSYITNLGLFSLVFLFNMAMLGTMVVQILRLRPHTQKWSHVLTLLGLSLVLGLPWALIFFSFASGTFQLVVLYLFSIITSFQGFLIFLWYWSMRLQARGGPSPLKSNSDSARLPISTGSTSSSRI.

An N-terminal signal peptide occupies residues 1 to 25 (MTAQSLLQTTLFLLSLLFLVQGAHG). 26–33 (RGHREDFR) serves as a coordination point for heparin. Residues 26 to 402 (RGHREDFRFC…VEVDAVHKHY (377 aa)) are Extracellular-facing. Cystine bridges form between Cys35-Cys91 and Cys121-Cys177. 4 N-linked (GlcNAc...) asparagine glycosylation sites follow: Asn39, Asn148, Asn156, and Asn171. 190–200 (LKHPQKASRRP) serves as a coordination point for heparin. A GAIN-B domain is found at 224 to 395 (DTVSFEEDRV…AVLMVSSVEV (172 aa)). Asn234, Asn303, Asn324, and Asn341 each carry an N-linked (GlcNAc...) asparagine glycan. Cystine bridges form between Cys346/Cys377 and Cys366/Cys379. Positions 346-395 (CVFWVEDPTLSNPGRWSSAGCETVRRETQTSCFCNHLTYFAVLMVSSVEV) are GPS. The stachel stretch occupies residues 384–397 (YFAVLMVSSVEVDA). The helical transmembrane segment at 403–423 (LSLLSYVGCVVSALACVVTIA) threads the bilayer. Residues 424–442 (AYLCSRRKPRDYTIKVHMN) are Cytoplasmic-facing. The chain crosses the membrane as a helical span at residues 443 to 463 (LLLAVFLLDVSFLLSEPVALT). At 464–470 (GSQSGCR) the chain is on the extracellular side. The helical transmembrane segment at 471–491 (ASAIFLHFSLLACLSWMGLEG) threads the bilayer. Over 492 to 512 (YNLYRLVVEVFGTYIPGYLLK) the chain is Cytoplasmic. Residues 513–533 (LSAMGWGFPIFLVTLVALVDV) traverse the membrane as a helical segment. Over 534 to 570 (DNYGPIILAVHRTPESVIYPSMCWIRDSLVSYITNLG) the chain is Extracellular. A helical transmembrane segment spans residues 571–591 (LFSLVFLFNMAMLGTMVVQIL). Over 592–603 (RLRPHTQKWSHV) the chain is Cytoplasmic. The helical transmembrane segment at 604 to 624 (LTLLGLSLVLGLPWALIFFSF) threads the bilayer. The Extracellular portion of the chain corresponds to 625 to 630 (ASGTFQ). A helical membrane pass occupies residues 631–651 (LVVLYLFSIITSFQGFLIFLW). The Cytoplasmic portion of the chain corresponds to 652 to 687 (YWSMRLQARGGPSPLKSNSDSARLPISTGSTSSSRI). The interval 664–687 (SPLKSNSDSARLPISTGSTSSSRI) is disordered. Over residues 666-687 (LKSNSDSARLPISTGSTSSSRI) the composition is skewed to polar residues.

It belongs to the G-protein coupled receptor 2 family. LN-TM7 subfamily. Heterodimer of 2 chains generated by proteolytic processing; the large extracellular N-terminal fragment (ADGRG1 NT) and the membrane-bound C-terminal fragment (ADGRG1-CT) predominantly remain associated and non-covalently linked. ADGRG1 NT self-associates in a trans-trans manner; the homophilic interaction enhances receptor signaling. Interacts with TGM2. Interacts with heparin; leading to the reduction of ADGRG1 shedding. Interacts with COL3A1. Part of a GPCR-tetraspanin complex at least consisting of ADGRG1, CD81, eventually CD9, and GNA11 in which CD81 is enhancing the association of ADGRG1 with GNA11. In terms of processing, autoproteolytically cleaved into 2 fragments; the large extracellular N-terminal fragment (ADGRG1 NT) and the membrane-bound C-terminal fragment (ADGRG1 CT) predominantly remain associated and non-covalently linked. Shedding to yield the secreted ADGRG1 N-terminal fragment seems to involve metalloprotease(s). Post-translationally, ubiquitinated. Undergoes polyubiquitination upon activation.

The protein resides in the cell membrane. It is found in the secreted. It localises to the membrane raft. Its activity is regulated as follows. Forms a heterodimer of 2 chains generated by proteolytic processing that remain associated through non-covalent interactions mediated by the GAIN-B domain. In the inactivated receptor, the Stachel sequence (also named stalk) is embedded in the GAIN-B domain, where it adopts a beta-strand conformation. On activation, the Stachel moves into the 7 transmembrane region and adopts a twisted hook-shaped configuration that forms contacts within the receptor, leading to coupling of a G-alpha protein, which activates signaling. The cleaved GAIN-B and N-terminal domains can then dissociate from the rest of the receptor. In terms of biological role, adhesion G-protein coupled receptor (aGPCR) for steroid hormone 17alpha-hydroxypregnenolone (17-OH), which is involved in cell adhesion and cell-cell interactions. Ligand binding causes a conformation change that triggers signaling via guanine nucleotide-binding proteins (G proteins) and modulates the activity of downstream effectors, such as RhoA pathway. ADGRG1 is coupled to G(12) and/or G(13) G proteins (GNA12 and GNA13, respectively) and mediates the activation Rho small GTPases. Acts as a potent suppressor of ferroptosis: binding to 17-OH-binding initiates signaling that down-regulates CD36 and alleviates ferroptosis-induced liver injury. Ligand-binding also induces cell adhesion activity via association with proteins such as collagen III/COL3A1 and TGM2. Mediates cell matrix adhesion in developing neurons and hematopoietic stem cells. Involved in cortical development, specifically in maintenance of the pial basement membrane integrity and in cortical lamination: association with COL3A1 in the developing brain inhibits neuronal migration via activation of the RhoA pathway. Together with TGM2, acts as a regulator of myelination and myelin repair in oligodendrocyte precursor cells. Acts as a hemostatic sensor of shear force: G protein-coupled receptor signaling is activated in response to shear force in platelets, promoting G(13) G protein signaling, and platelet shape change and aggregation in a COL3A1-dependent manner. Acts as an inhibitor of VEGFA production thereby inhibiting angiogenesis through a signaling pathway mediated by PRKCA. Plays a role in the maintenance of hematopoietic stem cells in bone marrow niche. Plays an essential role in testis development. The sequence is that of Adhesion G-protein coupled receptor G1 (ADGRG1) from Macaca mulatta (Rhesus macaque).